A 163-amino-acid chain; its full sequence is Putative pre-16S rRNA nuclease (163 aa).

The protein belongs to the YqgF nuclease family.

The protein localises to the cytoplasm. Functionally, could be a nuclease involved in processing of the 5'-end of pre-16S rRNA. The chain is Putative pre-16S rRNA nuclease from Chlamydia caviae (strain ATCC VR-813 / DSM 19441 / 03DC25 / GPIC) (Chlamydophila caviae).